The following is a 306-amino-acid chain: Ornithine carbamoyltransferase (306 aa).

Residues Ser-46–Thr-49, Gln-73, Arg-97, and His-124–Gln-127 contribute to the carbamoyl phosphate site. L-ornithine is bound by residues Asn-156, Asp-220, and Ser-224–Met-225. Residues Cys-260–Leu-261 and Arg-288 contribute to the carbamoyl phosphate site.

The protein belongs to the aspartate/ornithine carbamoyltransferase superfamily. OTCase family.

The protein localises to the cytoplasm. The catalysed reaction is carbamoyl phosphate + L-ornithine = L-citrulline + phosphate + H(+). It participates in amino-acid biosynthesis; L-arginine biosynthesis; L-arginine from L-ornithine and carbamoyl phosphate: step 1/3. Functionally, reversibly catalyzes the transfer of the carbamoyl group from carbamoyl phosphate (CP) to the N(epsilon) atom of ornithine (ORN) to produce L-citrulline. This Campylobacter jejuni subsp. jejuni serotype O:23/36 (strain 81-176) protein is Ornithine carbamoyltransferase.